A 552-amino-acid chain; its full sequence is Putative transport protein YPTS_4123 (552 aa).

Helical transmembrane passes span 1–21 (MSAI…GLWI), 26–46 (IYGV…VGHF), 65–85 (FGLI…FFSS), 96–116 (FAIL…KLFA), 119–139 (LPII…LGAA), and 158–178 (MGYA…MWLI). RCK C-terminal domains follow at residues 192–276 (AFDS…VVGE) and 279–361 (DVTL…IVGN). 6 consecutive transmembrane segments (helical) span residues 371 to 391 (MLPV…PLFV), 393 to 413 (GFPA…ALIL), 439 to 459 (IVLF…NTLV), 464 to 484 (LAWI…VGIL), 493 to 513 (YLTL…LAFA), and 530 to 550 (VYPL…VLFW).

This sequence belongs to the AAE transporter (TC 2.A.81) family. YidE subfamily.

It localises to the cell membrane. The sequence is that of Putative transport protein YPTS_4123 from Yersinia pseudotuberculosis serotype IB (strain PB1/+).